The following is a 95-amino-acid chain: MQVLVRDNNVDQALKALKKKMQREGIFREMKLRGHYEKPSEKKAREKAEAVRRARKLARKKMQREGLLPMKPKPVFGAGPGAGRGGPGAGARPPR.

Positions 55–95 are disordered; the sequence is RKLARKKMQREGLLPMKPKPVFGAGPGAGRGGPGAGARPPR. Over residues 78-89 the composition is skewed to gly residues; it reads AGPGAGRGGPGA.

It belongs to the bacterial ribosomal protein bS21 family.

The chain is Small ribosomal subunit protein bS21 from Nitrobacter hamburgensis (strain DSM 10229 / NCIMB 13809 / X14).